The primary structure comprises 393 residues: Cysteine protease ATG4B (393 aa).

The residue at position 1 (methionine 1) is an N-acetylmethionine. Residue serine 34 is modified to Phosphoserine. The active-site Nucleophile is the cysteine 74. The residue at position 189 (cysteine 189) is an S-nitrosocysteine. Active-site residues include aspartate 278 and histidine 280. S-nitrosocysteine is present on residues cysteine 292 and cysteine 301. A disulfide bond links cysteine 292 and cysteine 361. A phosphoserine mark is found at serine 316 and serine 383. Positions 388-391 (FEIL) match the LIR motif. The residue at position 392 (serine 392) is a Phosphoserine.

It belongs to the peptidase C54 family. Interacts with PFKP; promoting phosphorylation of ATG4B at Ser-34. Interacts with GBP7. Phosphorylation at Ser-383 and Ser-392 promotes autophagy by increasing protein delipidation activity without affecting proteolytic activation of ATG8 proteins. Phosphorylation at Ser-316 by ULK1 inhibits autophagy by decreasing both proteolytic activation and delipidation activities. Phosphorylation at Ser-316 is dephosphorylated by protein phosphatase 2A (PP2A). Phosphorylation at Ser-34 by AKT2 promotes its hydrolase activity, leading to increased proteolytic activation and delipidation of ATG8 family proteins. Phosphorylation at Ser-34 by AKT1 promotes mitochondrial localization and inhibition of the F1F0-ATP synthase activity, leading to elevation of mitochondrial reactive oxygen species (ROS). In terms of processing, ubiquitinated by RNF5, leading to its degradation by the proteasome. Post-translationally, S-nitrosylation at Cys-189 and Cys-292 in response to high glucose decreases both proteolytic activation and delipidation activities. O-glycosylated by OGT, leading to increase protease activity, thereby promoting the proteolytic activation of ATG8 family proteins. In terms of processing, forms reversible intrachain disulfide bonds in response to oxidative stress. Forms interchain disulfide bonds, leading to formation of homooligomers in response to oxidation.

It is found in the cytoplasm. It localises to the cytosol. The protein resides in the cytoplasmic vesicle. The protein localises to the autophagosome. Its subcellular location is the endoplasmic reticulum. It is found in the mitochondrion. The enzyme catalyses [protein]-C-terminal L-amino acid-glycyl-phosphatidylethanolamide + H2O = [protein]-C-terminal L-amino acid-glycine + a 1,2-diacyl-sn-glycero-3-phosphoethanolamine. It carries out the reaction [protein]-C-terminal L-amino acid-glycyl-phosphatidylserine + H2O = [protein]-C-terminal L-amino acid-glycine + a 1,2-diacyl-sn-glycero-3-phospho-L-serine. Its activity is regulated as follows. Inhibited by N-ethylmaleimide. Redox-regulated during autophagy since reducing conditions activate ATG4A whereas an oxidizing environment such as the presence of H(2)O(2) inhibits its activity. The cysteine protease activity compounds is inhibited by styrylquinoline compounds 4-28 and LV-320. In terms of biological role, cysteine protease that plays a key role in autophagy by mediating both proteolytic activation and delipidation of ATG8 family proteins. Required for canonical autophagy (macroautophagy), non-canonical autophagy as well as for mitophagy. The protease activity is required for proteolytic activation of ATG8 family proteins: cleaves the C-terminal amino acid of ATG8 proteins MAP1LC3A, MAP1LC3B, MAP1LC3C, GABARAPL1, GABARAPL2 and GABARAP, to reveal a C-terminal glycine. Exposure of the glycine at the C-terminus is essential for ATG8 proteins conjugation to phosphatidylethanolamine (PE) and insertion to membranes, which is necessary for autophagy. Protease activity is also required to counteract formation of high-molecular weight conjugates of ATG8 proteins (ATG8ylation): acts as a deubiquitinating-like enzyme that removes ATG8 conjugated to other proteins, such as ATG3. In addition to the protease activity, also mediates delipidation of ATG8 family proteins. Catalyzes delipidation of PE-conjugated forms of ATG8 proteins during macroautophagy. Also involved in non-canonical autophagy, a parallel pathway involving conjugation of ATG8 proteins to single membranes at endolysosomal compartments, by catalyzing delipidation of ATG8 proteins conjugated to phosphatidylserine (PS). Compared to other members of the family (ATG4A, ATG4C or ATG4C), constitutes the major protein for proteolytic activation of ATG8 proteins, while it displays weaker delipidation activity than other ATG4 paralogs. Involved in phagophore growth during mitophagy independently of its protease activity and of ATG8 proteins: acts by regulating ATG9A trafficking to mitochondria and promoting phagophore-endoplasmic reticulum contacts during the lipid transfer phase of mitophagy. Functionally, (Microbial infection) Mediates cleavage of an ATG8 protein homolog coded in the genome of cytopathogenic bovine viral diarrhea virus (BVDV). In Bos taurus (Bovine), this protein is Cysteine protease ATG4B (ATG4B).